The following is a 352-amino-acid chain: D-alanine--D-alanine ligase (352 aa).

The ATP-grasp domain maps to 135–344 (KTVFAKAGLP…FPQLVDRLIE (210 aa)). Position 171–226 (171–226 (EETLNYPCFVKPANLGSSVGIAKVRSRSELEKALDQAASYDRRIIVEAGVIAREVE)) interacts with ATP. Asp-297, Glu-311, and Asn-313 together coordinate Mg(2+).

Belongs to the D-alanine--D-alanine ligase family. Mg(2+) serves as cofactor. It depends on Mn(2+) as a cofactor.

The protein localises to the cytoplasm. It carries out the reaction 2 D-alanine + ATP = D-alanyl-D-alanine + ADP + phosphate + H(+). It participates in cell wall biogenesis; peptidoglycan biosynthesis. In terms of biological role, cell wall formation. The protein is D-alanine--D-alanine ligase of Gloeothece citriformis (strain PCC 7424) (Cyanothece sp. (strain PCC 7424)).